Reading from the N-terminus, the 571-residue chain is Hemagglutinin-neuraminidase (571 aa).

The Intravirion segment spans residues 1–25 (MEDYSNLSLKSIPKRTCRIIFRTAT). Residues 26–46 (ILGICTLIVLCSSILHEIIHL) traverse the membrane as a helical segment. Over 47–571 (DVSSGLMDSD…IIPFLRELIP (525 aa)) the chain is Virion surface. Intrachain disulfides connect Cys-166-Cys-190, Cys-180-Cys-241, and Cys-232-Cys-245. Positions 228–233 (NRKSCS) are important for neuraminidase activity. Positions 228–233 (NRKSCS) are involved in neuraminidase activity. N-linked (GlcNAc...) asparagine; by host glycosylation is found at Asn-272, Asn-284, Asn-335, and Asn-341. 3 disulfides stabilise this stretch: Cys-338–Cys-459, Cys-370–Cys-380, and Cys-453–Cys-463. Residue Asn-386 is glycosylated (N-linked (GlcNAc...) asparagine; by host). The tract at residues 393-398 (GAEGRL) is sialic receptor-binding site. N-linked (GlcNAc...) asparagine; by host glycans are attached at residues Asn-454, Asn-498, Asn-501, Asn-517, and Asn-522. An intrachain disulfide couples Cys-535 to Cys-546.

Belongs to the paramyxoviruses hemagglutinin-neuraminidase family. In terms of assembly, homotetramer; composed of disulfide-linked homodimers. Interacts with F protein trimer.

It is found in the virion membrane. The protein localises to the host cell membrane. It carries out the reaction Hydrolysis of alpha-(2-&gt;3)-, alpha-(2-&gt;6)-, alpha-(2-&gt;8)- glycosidic linkages of terminal sialic acid residues in oligosaccharides, glycoproteins, glycolipids, colominic acid and synthetic substrates.. Attaches the virus to sialic acid-containing cell receptors and thereby initiating infection. Binding of HN protein to the receptor induces a conformational change that allows the F protein to trigger virion/cell membranes fusion. Its function is as follows. Neuraminidase activity ensures the efficient spread of the virus by dissociating the mature virions from the neuraminic acid containing glycoproteins. The chain is Hemagglutinin-neuraminidase (HN) from Human parainfluenza 2 virus (strain Toshiba) (HPIV-2).